A 155-amino-acid chain; its full sequence is Large ribosomal subunit protein uL22c (155 aa).

The protein belongs to the universal ribosomal protein uL22 family. As to quaternary structure, part of the 50S ribosomal subunit.

The protein localises to the plastid. Its subcellular location is the chloroplast. This protein binds specifically to 23S rRNA. In terms of biological role, the globular domain of the protein is located near the polypeptide exit tunnel on the outside of the subunit, while an extended beta-hairpin is found that lines the wall of the exit tunnel in the center of the 70S ribosome. This Atropa belladonna (Belladonna) protein is Large ribosomal subunit protein uL22c (rpl22).